Here is a 1497-residue protein sequence, read N- to C-terminus: Polyunsaturated fatty acid synthase subunit C (1497 aa).

Dehydratase (DH) domain stretches follow at residues 271-422 (YKLC…DYGK) and 797-937 (QGQY…RVRI). The span at 944 to 958 (ASSSASSVGSSASAE) shows a compositional bias: low complexity. Residues 944 to 977 (ASSSASSVGSSASAEVAERTRSKAAPQPVASGPA) form a disordered region. The segment at 1026–1470 (LGDLGDRSFM…ILRGACYLRR (445 aa)) is enoylreductase (ER) domain.

This sequence belongs to the thioester dehydratase family. FabA subfamily. As to quaternary structure, component of the polyunsaturated fatty acid synthase complex composed of at least ORF-A, ORF-B and ORF-C.

It functions in the pathway lipid metabolism; fatty acid biosynthesis. Functionally, polyketide synthase-like protein; part of the polyunsaturated fatty acid synthase composed of the 3 PKS-like subunits A, B and C. While the saturated fatty acids (SFAs) in Thraustochytrium are produced by the conventional fatty acid synthase (FAS) pathway, polyunsaturated fatty acids (PUFAs) including docosahexeanoic acid (DHA) and docosapentaenoic acid (DPA) are synthesized via an anaerobical PKS pathway. PUFA synthase assimilates fatty acyl-CoA, the product of FAS, as the starter unit to synthesize DPA, and this starter unit may be butyryl-CoA, hexanoyl-CoA, or octanoyl-CoA. DPA and DHA biosynthesis seem to differ by the reduction at the N-3 position by PUFA synthase, not the extension of carbon chain. In DHA biosynthesis, PUFA synthase extends the fatty acyl chain from the methyl toward the carboxyl end, and the double bond is formed when the carbon chain is growing, instead of afterward. Therefore, PUFA synthase is unable to transform DPA to DHA, suggesting that DPA is not the precursor of DHA. Moreover, DPA molecule is partly extended by FAS KS domain, so DPA biosynthesis is less dependent on PUFA synthase KS domain than DHA. The sequence is that of Polyunsaturated fatty acid synthase subunit C from Thraustochytrium sp. (strain ATCC 26185 / S-3).